A 367-amino-acid chain; its full sequence is Serine/threonine-protein kinase Sgk2 (367 aa).

Positions 1–28 (MASSPVGVPSPQPSRANGNINLGPSANP) are disordered. S10 bears the Phosphoserine mark. Positions 15–28 (RANGNINLGPSANP) are enriched in polar residues. A Protein kinase domain is found at 35 to 292 (FDFLKVIGKG…FLDIKNHMFF (258 aa)). Residues 41 to 49 (IGKGNYGKV) and K64 each bind ATP. Residues 68 to 78 (KKSILKNKEQN) carry the Nuclear localization signal motif. D159 (proton acceptor) is an active-site residue. T193 bears the Phosphothreonine; by PDPK1 mark. In terms of domain architecture, AGC-kinase C-terminal spans 293–367 (SPINWDDLYH…AQDDDDILDS (75 aa)). Residues S334 and S356 each carry the phosphoserine modification. Y357 carries the phosphotyrosine modification.

This sequence belongs to the protein kinase superfamily. AGC Ser/Thr protein kinase family. Activated by phosphorylation on Ser-356 by an unknown kinase (may be mTORC2 but not confirmed), transforming it into a substrate for PDPK1 which then phosphorylates it on Thr-193.

The protein localises to the cytoplasm. The protein resides in the nucleus. The enzyme catalyses L-seryl-[protein] + ATP = O-phospho-L-seryl-[protein] + ADP + H(+). The catalysed reaction is L-threonyl-[protein] + ATP = O-phospho-L-threonyl-[protein] + ADP + H(+). With respect to regulation, two specific sites, one in the kinase domain (Thr-193) and the other in the C-terminal regulatory region (Ser-356), need to be phosphorylated for its full activation. Its function is as follows. Serine/threonine-protein kinase which is involved in the regulation of a wide variety of ion channels, membrane transporters, cell growth, survival and proliferation. Up-regulates Na(+) channels: SCNN1A/ENAC, K(+) channels: KCNA3/Kv1.3, KCNE1 and KCNQ1, amino acid transporter: SLC6A19, glutamate transporter: SLC1A6/EAAT4, glutamate receptors: GRIA1/GLUR1 and GRIK2/GLUR6, Na(+)/H(+) exchanger: SLC9A3/NHE3, and the Na(+)/K(+) ATPase. In Mus musculus (Mouse), this protein is Serine/threonine-protein kinase Sgk2 (Sgk2).